Reading from the N-terminus, the 400-residue chain is Golgin-45 (400 aa).

The segment covering 1–16 (MTTKNLETKVTVTSSP) has biased composition (polar residues). The disordered stretch occupies residues 1–58 (MTTKNLETKVTVTSSPIRGAGDGMETEEPPKSVEVTSGVQSRKHHSLQSPWKKAVPSE). Ser-15 carries the post-translational modification Phosphoserine. The Tankyrase-binding motif signature appears at 18–22 (RGAGD). Ser-49 carries the phosphoserine modification. The stretch at 120-213 (NKELSEVKNV…QLERMSIQCD (94 aa)) forms a coiled coil. Thr-348 is modified (phosphothreonine). Ser-353 carries the post-translational modification Phosphoserine. The essential for interaction with GORASP2 stretch occupies residues 394–400 (RGELIAL).

Interacts with GORASP2. Interacts with the GTP-bound form of RAB2, but not with other Golgi Rab proteins. Identified in a complex with RAB2 and GORASP2. Post-translationally, ADP-ribosylated by tankyrase TNKS and TNKS2. Poly-ADP-ribosylated protein is recognized by RNF146, followed by ubiquitination. Ubiquitinated by RNF146 when poly-ADP-ribosylated, leading to its degradation. As to expression, detected in adrenal gland.

Its subcellular location is the golgi apparatus membrane. The protein localises to the nucleus. The protein resides in the cytoplasm. Its function is as follows. Required for normal Golgi structure and for protein transport from the endoplasmic reticulum (ER) through the Golgi apparatus to the cell surface. The sequence is that of Golgin-45 (BLZF1) from Homo sapiens (Human).